A 1023-amino-acid chain; its full sequence is DNA polymerase (1023 aa).

A disordered region spans residues 726–751 (QTDATRKHRQCTPTSNSSSDEDAPFY).

It belongs to the DNA polymerase type-B family. Heterodimer with the terminal protein; this heterodimer binds to bp 9 to 18 of the genome. Forms a complex with viral pTP, DBP and hosts NFIA and POU2F1/OCT1 for initiation of replication.

The protein resides in the host nucleus. It catalyses the reaction DNA(n) + a 2'-deoxyribonucleoside 5'-triphosphate = DNA(n+1) + diphosphate. Eukaryotic-type DNA polymerase involved in viral genomic replication. DNA synthesis is protein primed, and acts in a strand displacement replication. Assembles in complex with viral pTP, DBP, host NFIA and host POU2F1/OCT1 on viral origin of replication. The polymerase covalently transfers dCMP onto pTP, thereby initiating complementary strand synthesis. The chain is DNA polymerase from Bovine adenovirus B serotype 3 (BAdV-3).